A 213-amino-acid polypeptide reads, in one-letter code: Protein-L-isoaspartate O-methyltransferase (213 aa).

S62 is an active-site residue.

The protein belongs to the methyltransferase superfamily. L-isoaspartyl/D-aspartyl protein methyltransferase family.

The protein resides in the cytoplasm. The enzyme catalyses [protein]-L-isoaspartate + S-adenosyl-L-methionine = [protein]-L-isoaspartate alpha-methyl ester + S-adenosyl-L-homocysteine. Catalyzes the methyl esterification of L-isoaspartyl residues in peptides and proteins that result from spontaneous decomposition of normal L-aspartyl and L-asparaginyl residues. It plays a role in the repair and/or degradation of damaged proteins. In Idiomarina loihiensis (strain ATCC BAA-735 / DSM 15497 / L2-TR), this protein is Protein-L-isoaspartate O-methyltransferase.